The sequence spans 538 residues: Capsular polysaccharide biosynthesis protein RkpI (538 aa).

The next 6 helical transmembrane spans lie at 16–36, 70–90, 114–134, 139–159, 170–190, and 212–232; these read LHDYPIALTLGCYLLSCAVIF, VIALVFAGFFAISWRPLYAAA, LVFSDIALVADVFKYKTIFYA, IVFWIVAFLYVFGVSALYMYF, LFWVLVMVGIAAGPWGLLFYG, and NTVRFGTFASVVFHFIIWLGV.

The protein localises to the cell membrane. Its pathway is capsule biogenesis; capsule polysaccharide biosynthesis. Functionally, involved in antigen K (capsular polysaccharide) biosynthesis. This Rhizobium meliloti (strain 1021) (Ensifer meliloti) protein is Capsular polysaccharide biosynthesis protein RkpI (rkpI).